Here is a 743-residue protein sequence, read N- to C-terminus: Glycerol dehydrogenase large subunit (743 aa).

The N-terminal stretch at 1-24 is a signal peptide; sequence MRRSHLLATVACATLACAPLAANA. The segment covering 27 to 41 has biased composition (low complexity); that stretch reads APAGSGGSPTSSVPG. Disordered regions lie at residues 27–115 and 445–474; these read APAG…GHDD and ILPV…STGM.

Belongs to the bacterial PQQ dehydrogenase family. Pyrroloquinoline quinone is required as a cofactor.

Its subcellular location is the secreted. It catalyses the reaction glycerol + A = dihydroxyacetone + AH2. Catalyzes the oxidation of glycerol to glycerone. Also acts, more slowly, on a number of other polyols including D-sorbitol, D-arabinitol, D-mannitol, meso-erythritol, adonitol and propylene glycol. This chain is Glycerol dehydrogenase large subunit (sldA), found in Gluconobacter oxydans (strain 621H) (Gluconobacter suboxydans).